Here is a 257-residue protein sequence, read N- to C-terminus: Probable amino-acid ABC transporter-binding protein HI_1080 (257 aa).

An N-terminal signal peptide occupies residues 1–23; that stretch reads MKKLLFTTALLTGAIAFSTFSHA.

The protein belongs to the bacterial solute-binding protein 3 family.

It is found in the periplasm. Probably part of a binding-protein-dependent transport system for an amino acid. The polypeptide is Probable amino-acid ABC transporter-binding protein HI_1080 (Haemophilus influenzae (strain ATCC 51907 / DSM 11121 / KW20 / Rd)).